Reading from the N-terminus, the 392-residue chain is Na(+)/H(+) antiporter NhaA (392 aa).

11 helical membrane passes run 16–36 (ILLI…LSAA), 58–78 (LLLW…GLEV), 93–113 (ITLP…IFIL), 124–144 (GWAI…SLLG), 153–173 (IFLM…IALF), 176–196 (TDLS…LFIM), 199–219 (MDVA…VSVL), 257–277 (DLHY…NAGV), 295–315 (VMLG…WLAI), 328–348 (WMML…SLFV), and 362–382 (ADKL…YLIL).

It belongs to the NhaA Na(+)/H(+) (TC 2.A.33) antiporter family.

The protein localises to the cell inner membrane. The catalysed reaction is Na(+)(in) + 2 H(+)(out) = Na(+)(out) + 2 H(+)(in). Its function is as follows. Na(+)/H(+) antiporter that extrudes sodium in exchange for external protons. The polypeptide is Na(+)/H(+) antiporter NhaA (Sulfurovum sp. (strain NBC37-1)).